Consider the following 575-residue polypeptide: Intermediate filament protein ifa-1 (575 aa).

Disordered stretches follow at residues 1-30 (MMEI…TGNV) and 45-72 (SGAG…EKKE). Positions 1–72 (MMEITRETMS…RDSREREKKE (72 aa)) are head. Polar residues predominate over residues 7–17 (ETMSFTSTTPS). Residues 63–72 (RDSREREKKE) show a composition bias toward basic and acidic residues. The IF rod domain occupies 69–422 (EKKEMSDLND…KMLEGEENRA (354 aa)). Positions 73-104 (MSDLNDRLASYIEKVRFLEAQNRKLAADLDAL) are coil 1A. The tract at residues 105–118 (RSKWGKDTHNIRNM) is linker 1. The tract at residues 119–256 (YEGELVDAQK…RVHDNEIKEL (138 aa)) is coil 1B. The tract at residues 257–274 (QTLASRDTTPENREFFKN) is linker 12. The coil 2 stretch occupies residues 275–422 (ELSSAIRDIR…KMLEGEENRA (148 aa)). Positions 423 to 572 (GLKQLVEQVV…EERATHIQRQ (150 aa)) are tail. Residues 455 to 572 (SRQSFQRSAK…EERATHIQRQ (118 aa)) form the LTD domain.

It belongs to the intermediate filament family. In terms of assembly, forms some heteromeric filaments with ifb-1. As to expression, isoform d is abundantly expressed in the marginal cells of the pharynx, forming apicobasally oriented thick filament bundles that are attached to the apical and basal plasma membrane by hemi-adherens junctions. Expression of isoform c is also seen in the excretory cells and in the uterus. Isoform c is detectable in the amphid sensory neurins and the pharyngeal-intestinal valve. Both isoform c and isoform d are expressed in the rectum and vulva and in some neurons of the tail. In larvae, expression is seen in the excretory cell, the vulva, the rectum and in the thick filament bundles of the pharynx. Expression in pharynx begins in late embryos.

It is found in the cytoplasm. In terms of biological role, cytoplasmic intermediate filaments make up the structural component of the cytoskeleton providing mechanical strength to cells. Essential protein required during embryogenesis especially for survival past the L1 larva stage, involved in intestine morphogenesis. In Caenorhabditis elegans, this protein is Intermediate filament protein ifa-1 (ifa-1).